A 443-amino-acid polypeptide reads, in one-letter code: Glutamate-1-semialdehyde 2,1-aminomutase (443 aa).

Residue Lys281 is modified to N6-(pyridoxal phosphate)lysine.

Belongs to the class-III pyridoxal-phosphate-dependent aminotransferase family. HemL subfamily. In terms of assembly, homodimer. Requires pyridoxal 5'-phosphate as cofactor.

It is found in the cytoplasm. It carries out the reaction (S)-4-amino-5-oxopentanoate = 5-aminolevulinate. It functions in the pathway porphyrin-containing compound metabolism; protoporphyrin-IX biosynthesis; 5-aminolevulinate from L-glutamyl-tRNA(Glu): step 2/2. The protein is Glutamate-1-semialdehyde 2,1-aminomutase of Leptospira interrogans serogroup Icterohaemorrhagiae serovar Lai (strain 56601).